The sequence spans 369 residues: Tetraacyldisaccharide 4'-kinase (369 aa).

68 to 75 (VVGGTGKT) serves as a coordination point for ATP.

Belongs to the LpxK family.

The catalysed reaction is a lipid A disaccharide + ATP = a lipid IVA + ADP + H(+). Its pathway is glycolipid biosynthesis; lipid IV(A) biosynthesis; lipid IV(A) from (3R)-3-hydroxytetradecanoyl-[acyl-carrier-protein] and UDP-N-acetyl-alpha-D-glucosamine: step 6/6. In terms of biological role, transfers the gamma-phosphate of ATP to the 4'-position of a tetraacyldisaccharide 1-phosphate intermediate (termed DS-1-P) to form tetraacyldisaccharide 1,4'-bis-phosphate (lipid IVA). This is Tetraacyldisaccharide 4'-kinase from Chlamydia muridarum (strain MoPn / Nigg).